The chain runs to 129 residues: Small ribosomal subunit protein uS11 (129 aa).

The protein belongs to the universal ribosomal protein uS11 family. As to quaternary structure, part of the 30S ribosomal subunit. Interacts with proteins S7 and S18. Binds to IF-3.

Functionally, located on the platform of the 30S subunit, it bridges several disparate RNA helices of the 16S rRNA. Forms part of the Shine-Dalgarno cleft in the 70S ribosome. The polypeptide is Small ribosomal subunit protein uS11 (Maricaulis maris (strain MCS10) (Caulobacter maris)).